The chain runs to 118 residues: MRSAKLKFEKRRSRIRHKISKTSNRVRLSIFKSGRHIYAQIIDDSKSITIASASTLDKKIKKFKKSHCNIENAIKVGEEIAKKADSAGIKEVVFDRGGYKYHGVVKALADAAREKIKF.

This sequence belongs to the universal ribosomal protein uL18 family. In terms of assembly, part of the 50S ribosomal subunit; part of the 5S rRNA/L5/L18/L25 subcomplex. Contacts the 5S and 23S rRNAs.

In terms of biological role, this is one of the proteins that bind and probably mediate the attachment of the 5S RNA into the large ribosomal subunit, where it forms part of the central protuberance. The protein is Large ribosomal subunit protein uL18 of Rickettsia felis (strain ATCC VR-1525 / URRWXCal2) (Rickettsia azadi).